A 221-amino-acid polypeptide reads, in one-letter code: Nuclear phosphoprotein UL3 homolog (221 aa).

This sequence belongs to the alphaherpesvirinae HHV-1 UL3 family. Phosphorylated.

The protein localises to the host nucleus. This Varicella-zoster virus (strain Dumas) (HHV-3) protein is Nuclear phosphoprotein UL3 homolog.